A 156-amino-acid polypeptide reads, in one-letter code: Small ribosomal subunit protein uS7 (156 aa).

The protein belongs to the universal ribosomal protein uS7 family. Part of the 30S ribosomal subunit. Contacts proteins S9 and S11.

In terms of biological role, one of the primary rRNA binding proteins, it binds directly to 16S rRNA where it nucleates assembly of the head domain of the 30S subunit. Is located at the subunit interface close to the decoding center, probably blocks exit of the E-site tRNA. The sequence is that of Small ribosomal subunit protein uS7 from Syntrophobacter fumaroxidans (strain DSM 10017 / MPOB).